Reading from the N-terminus, the 106-residue chain is Thiosulfate sulfurtransferase GlpE (106 aa).

One can recognise a Rhodanese domain in the interval 17–105 (EQNEARLVDI…SYRAELPVIA (89 aa)). Cys-65 (cysteine persulfide intermediate) is an active-site residue.

It belongs to the GlpE family.

The protein localises to the cytoplasm. The catalysed reaction is thiosulfate + hydrogen cyanide = thiocyanate + sulfite + 2 H(+). It catalyses the reaction thiosulfate + [thioredoxin]-dithiol = [thioredoxin]-disulfide + hydrogen sulfide + sulfite + 2 H(+). Its function is as follows. Transferase that catalyzes the transfer of sulfur from thiosulfate to thiophilic acceptors such as cyanide or dithiols. May function in a CysM-independent thiosulfate assimilation pathway by catalyzing the conversion of thiosulfate to sulfite, which can then be used for L-cysteine biosynthesis. The polypeptide is Thiosulfate sulfurtransferase GlpE (Vibrio atlanticus (strain LGP32) (Vibrio splendidus (strain Mel32))).